A 297-amino-acid polypeptide reads, in one-letter code: Protoheme IX farnesyltransferase 1 (297 aa).

9 helical membrane passes run 23-43 (VVVL…RAGV), 45-65 (WSVL…AAVV), 93-113 (LPAL…LLAF), 117-137 (LTAW…TGFL), 145-165 (IVIG…AVSG), 171-191 (PLLL…ALAI), 216-236 (LHIL…YAIH), 241-261 (LYLA…WVLY), and 277-297 (IAYL…LLNL).

This sequence belongs to the UbiA prenyltransferase family. Protoheme IX farnesyltransferase subfamily.

Its subcellular location is the cell inner membrane. The enzyme catalyses heme b + (2E,6E)-farnesyl diphosphate + H2O = Fe(II)-heme o + diphosphate. The protein operates within porphyrin-containing compound metabolism; heme O biosynthesis; heme O from protoheme: step 1/1. In terms of biological role, converts heme B (protoheme IX) to heme O by substitution of the vinyl group on carbon 2 of heme B porphyrin ring with a hydroxyethyl farnesyl side group. The chain is Protoheme IX farnesyltransferase 1 from Pseudomonas putida (strain GB-1).